A 709-amino-acid polypeptide reads, in one-letter code: Elongation factor G (709 aa).

Positions A9–T292 constitute a tr-type G domain. Residues A18–T25, D89–H93, and N143–D146 each bind GTP.

The protein belongs to the TRAFAC class translation factor GTPase superfamily. Classic translation factor GTPase family. EF-G/EF-2 subfamily.

The protein localises to the cytoplasm. Catalyzes the GTP-dependent ribosomal translocation step during translation elongation. During this step, the ribosome changes from the pre-translocational (PRE) to the post-translocational (POST) state as the newly formed A-site-bound peptidyl-tRNA and P-site-bound deacylated tRNA move to the P and E sites, respectively. Catalyzes the coordinated movement of the two tRNA molecules, the mRNA and conformational changes in the ribosome. The polypeptide is Elongation factor G (Blochmanniella floridana).